Here is a 561-residue protein sequence, read N- to C-terminus: Excitatory amino acid transporter 4 (561 aa).

Over 1 to 52 (MSSHGNSLFLRESGAGGGCLQGLQDSLQQRALRTRLRLQTMTREHVRRFLRR) the chain is Cytoplasmic. S2 carries the phosphoserine modification. 3 helical membrane-spanning segments follow: residues 53–73 (NAFI…AFAL), 96–116 (MLQM…MASL), and 130–150 (VYYM…VTII). Residues N213, N229, and N236 are each glycosylated (N-linked (GlcNAc...) asparagine). Helical transmembrane passes span 259–282 (SANG…IGGM), 292–319 (FFDS…LFLI), and 341–362 (LTVI…YFLV). Positions 368 to 398 (FPFIGGILQALITAMGTSSSSATLPITFRCL) form an intramembrane region, discontinuously helical. 385 to 387 (SSS) provides a ligand contact to L-aspartate. A helical membrane pass occupies residues 408 to 434 (ITRFVLPVGATVNMDGTALYEALAAIF). 3 residues coordinate Na(+): G416, T418, and N420. L-aspartate-binding positions include T424, 465–469 (IPQAG), D498, and N505. Residues 448 to 481 (ITTISITATAASVGAAGIPQAGLVTMVIVLTSVG) constitute an intramembrane region (discontinuously helical). A helical membrane pass occupies residues 495–516 (WFLDRLRTMTNVLGDSIGAAVI). Positions 505 and 509 each coordinate Na(+).

This sequence belongs to the dicarboxylate/amino acid:cation symporter (DAACS) (TC 2.A.23) family. SLC1A6 subfamily. In terms of assembly, homotrimer.

It localises to the cell membrane. The catalysed reaction is K(+)(in) + L-glutamate(out) + 3 Na(+)(out) + H(+)(out) = K(+)(out) + L-glutamate(in) + 3 Na(+)(in) + H(+)(in). It carries out the reaction K(+)(in) + L-aspartate(out) + 3 Na(+)(out) + H(+)(out) = K(+)(out) + L-aspartate(in) + 3 Na(+)(in) + H(+)(in). The enzyme catalyses D-aspartate(out) + K(+)(in) + 3 Na(+)(out) + H(+)(out) = D-aspartate(in) + K(+)(out) + 3 Na(+)(in) + H(+)(in). Functionally, sodium-dependent, high-affinity amino acid transporter that mediates the uptake of L-glutamate and also L-aspartate and D-aspartate. Functions as a symporter that transports one amino acid molecule together with two or three Na(+) ions and one proton, in parallel with the counter-transport of one K(+) ion. Mediates Cl(-) flux that is not coupled to amino acid transport; this avoids the accumulation of negative charges due to aspartate and Na(+) symport. Plays a redundant role in the rapid removal of released glutamate from the synaptic cleft, which is essential for terminating the postsynaptic action of glutamate. The sequence is that of Excitatory amino acid transporter 4 (Slc1a6) from Rattus norvegicus (Rat).